The following is a 712-amino-acid chain: Serrate RNA effector molecule homolog (712 aa).

3 disordered regions span residues 1 to 80 (MVDS…DSIY), 214 to 256 (ADIK…TEKS), and 620 to 712 (QRPV…DDIP). Composition is skewed to basic and acidic residues over residues 8-26 (GDRR…DYRR) and 34-54 (YDNK…SRGD). Positions 65–79 (RSGNGSDLPTESDSI) are enriched in polar residues. The segment covering 214-236 (ADIKKDENGNGTEQPKEEPEVKQ) has biased composition (basic and acidic residues). Acidic residues predominate over residues 240–251 (ATEELEEGAIED). 2 stretches are compositionally biased toward basic and acidic residues: residues 621 to 637 (RPVD…DHRG) and 645 to 655 (GYGRERDDDRG). Residues 656–668 (PGGGGRNSFGGGG) show a composition bias toward gly residues.

Belongs to the ARS2 family.

The protein resides in the nucleus. Acts as a mediator between the cap-binding complex (CBC) and the primary microRNAs (miRNAs) processing machinery. Contributes to the stability and delivery of capped primary miRNA transcripts to the primary miRNA processing complex, thereby playing a role in RNA-mediated gene silencing (RNAi) by miRNAs. This chain is Serrate RNA effector molecule homolog, found in Caenorhabditis elegans.